The sequence spans 777 residues: Rho guanine nucleotide exchange factor 38 (777 aa).

Thr-34 is modified (phosphothreonine). Residues 35–72 (DTVVESSVSGDHSGTLRRSQSDRTEYNQKLQEKMTPQG) are disordered. The segment covering 37–52 (VVESSVSGDHSGTLRR) has biased composition (polar residues). The segment covering 53–66 (SQSDRTEYNQKLQE) has biased composition (basic and acidic residues). One can recognise a DH domain in the interval 94 to 285 (KREKIIKELI…KDINVNINEL (192 aa)). The 210-residue stretch at 327 to 536 (LKILTRGESQ…QNQVLEEIQN (210 aa)) folds into the BAR domain. Residues 582-645 (SAEELYQAKR…YSSFLKPYNP (64 aa)) form the SH3 1 domain. Residues 673–694 (PASDSVTGTSESSIGDSSSSLS) are disordered. Positions 679-694 (TGTSESSIGDSSSSLS) are enriched in low complexity. Positions 713-776 (VDEQIFYAVH…PANYLGKMTY (64 aa)) constitute an SH3 2 domain.

In terms of biological role, may act as a guanine-nucleotide releasing factor. In Homo sapiens (Human), this protein is Rho guanine nucleotide exchange factor 38 (ARHGEF38).